The following is a 371-amino-acid chain: Chorismate synthase (371 aa).

NADP(+) is bound by residues arginine 48 and arginine 54. Residues 125 to 127 (RSS), 238 to 239 (NA), glycine 278, 293 to 297 (KPTSS), and arginine 319 each bind FMN.

It belongs to the chorismate synthase family. Homotetramer. Requires FMNH2 as cofactor.

It carries out the reaction 5-O-(1-carboxyvinyl)-3-phosphoshikimate = chorismate + phosphate. The protein operates within metabolic intermediate biosynthesis; chorismate biosynthesis; chorismate from D-erythrose 4-phosphate and phosphoenolpyruvate: step 7/7. Its function is as follows. Catalyzes the anti-1,4-elimination of the C-3 phosphate and the C-6 proR hydrogen from 5-enolpyruvylshikimate-3-phosphate (EPSP) to yield chorismate, which is the branch point compound that serves as the starting substrate for the three terminal pathways of aromatic amino acid biosynthesis. This reaction introduces a second double bond into the aromatic ring system. This is Chorismate synthase from Polynucleobacter asymbioticus (strain DSM 18221 / CIP 109841 / QLW-P1DMWA-1) (Polynucleobacter necessarius subsp. asymbioticus).